A 48-amino-acid polypeptide reads, in one-letter code: Large ribosomal subunit protein eL40 (48 aa).

It belongs to the eukaryotic ribosomal protein eL40 family.

The protein is Large ribosomal subunit protein eL40 of Methanobrevibacter smithii (strain ATCC 35061 / DSM 861 / OCM 144 / PS).